We begin with the raw amino-acid sequence, 213 residues long: Proteasome subunit beta (213 aa).

Positions 1 to 11 (MPEQYQESMTG) are cleaved as a propeptide — removed in mature form; by autocatalysis. The active-site Nucleophile is threonine 12.

The protein belongs to the peptidase T1B family. As to quaternary structure, the 20S proteasome core is composed of 14 alpha and 14 beta subunits that assemble into four stacked heptameric rings, resulting in a barrel-shaped structure. The two inner rings, each composed of seven catalytic beta subunits, are sandwiched by two outer rings, each composed of seven alpha subunits. The catalytic chamber with the active sites is on the inside of the barrel. Has a gated structure, the ends of the cylinder being occluded by the N-termini of the alpha-subunits. Is capped at one or both ends by the proteasome regulatory ATPase, PAN.

The protein localises to the cytoplasm. It carries out the reaction Cleavage of peptide bonds with very broad specificity.. The formation of the proteasomal ATPase PAN-20S proteasome complex, via the docking of the C-termini of PAN into the intersubunit pockets in the alpha-rings, triggers opening of the gate for substrate entry. Interconversion between the open-gate and close-gate conformations leads to a dynamic regulation of the 20S proteasome proteolysis activity. Component of the proteasome core, a large protease complex with broad specificity involved in protein degradation. The protein is Proteasome subunit beta of Methanoregula boonei (strain DSM 21154 / JCM 14090 / 6A8).